Here is a 496-residue protein sequence, read N- to C-terminus: Lysine--tRNA ligase (496 aa).

Residues Glu-408 and Glu-415 each contribute to the Mg(2+) site.

This sequence belongs to the class-II aminoacyl-tRNA synthetase family. In terms of assembly, homodimer. Mg(2+) is required as a cofactor.

The protein localises to the cytoplasm. The enzyme catalyses tRNA(Lys) + L-lysine + ATP = L-lysyl-tRNA(Lys) + AMP + diphosphate. This chain is Lysine--tRNA ligase, found in Legionella pneumophila (strain Paris).